The following is a 202-amino-acid chain: Transcription factor IBH1 (202 aa).

Residues 1–16 (MDAKRTPPPPTPPNPN) show a composition bias toward pro residues. The segment at 1 to 33 (MDAKRTPPPPTPPNPNPSVIGSGAAADGGGFGR) is disordered. In terms of domain architecture, bHLH spans 136 to 185 (TSAAARAVPPPPRQQGEPPRADALRRLVPGGAGMEYSSLLEETADYLRSL).

This sequence belongs to the bHLH protein family. Interacts with ILI1.

Functionally, atypical and probable non DNA-binding bHLH transcription factor that acts as a negative regulator of cell elongation and plant development. Binds the transcription factor ILI1 and forms a heterodimer of antagonistic bHLH transcription factors that function downstream of BZR1 to mediate brassinosteroid regulation of cell elongation and lamina inclination. This is Transcription factor IBH1 (IBH1) from Oryza sativa subsp. indica (Rice).